A 570-amino-acid polypeptide reads, in one-letter code: Nucleoprotein (570 aa).

Residues 54-241 (MRKEKRDDSD…IEPKKSAINI (188 aa)) form a binding site for the cap structure m7GTP region. Mn(2+) contacts are provided by Asp-390 and Glu-392. The Zn(2+) site is built by Glu-400, Cys-507, His-510, and Cys-530. Asp-534 lines the Mn(2+) pocket.

It belongs to the arenaviridae nucleocapsid protein family. In terms of assembly, homomultimerizes to form the nucleocapsid. Binds to viral genomic RNA. Interacts with glycoprotein G2. Interacts with protein Z; this interaction probably directs the encapsidated genome to budding sites. Interacts with protein L; this interaction does not interfere with Z-L interaction. Interacts with host IKBKE (via Protein kinase domain); the interaction inhibits IKBKE kinase activity.

Its subcellular location is the virion. It is found in the host cytoplasm. In terms of biological role, encapsidates the genome, protecting it from nucleases. The encapsidated genomic RNA is termed the nucleocapsid (NC). Serves as template for viral transcription and replication. The increased presence of protein N in host cell does not seem to trigger the switch from transcription to replication as observed in other negative strain RNA viruses. Through the interaction with host IKBKE, strongly inhibits the phosphorylation and nuclear translocation of host IRF3, a protein involved in interferon activation pathway, leading to the inhibition of interferon-beta and IRF3-dependent promoters activation. Also encodes a functional 3'-5' exoribonuclease that degrades preferentially dsRNA substrates and thereby participates in the suppression of interferon induction. This is Nucleoprotein from Mopeia virus (MOPV).